An 81-amino-acid chain; its full sequence is Probable antitoxin MazE2 (81 aa).

As to quaternary structure, forms a complex with cognate toxin MazF2.

Functionally, antitoxin component of a type II toxin-antitoxin (TA) system. This chain is Probable antitoxin MazE2 (mazE2), found in Mycobacterium tuberculosis (strain ATCC 25618 / H37Rv).